Reading from the N-terminus, the 513-residue chain is Histidine ammonia-lyase (513 aa).

A cross-link (5-imidazolinone (Ala-Gly)) is located at residues 146-148 (ASG). Ser-147 is modified (2,3-didehydroalanine (Ser)).

It belongs to the PAL/histidase family. Post-translationally, contains an active site 4-methylidene-imidazol-5-one (MIO), which is formed autocatalytically by cyclization and dehydration of residues Ala-Ser-Gly.

The protein localises to the cytoplasm. The enzyme catalyses L-histidine = trans-urocanate + NH4(+). It participates in amino-acid degradation; L-histidine degradation into L-glutamate; N-formimidoyl-L-glutamate from L-histidine: step 1/3. The polypeptide is Histidine ammonia-lyase (Caulobacter vibrioides (strain NA1000 / CB15N) (Caulobacter crescentus)).